The following is a 356-amino-acid chain: Probable butyrate kinase (356 aa).

It belongs to the acetokinase family.

Its subcellular location is the cytoplasm. It catalyses the reaction butanoate + ATP = butanoyl phosphate + ADP. The polypeptide is Probable butyrate kinase (Clostridium perfringens (strain SM101 / Type A)).